The primary structure comprises 94 residues: Preprofallaxidin-9 (94 aa).

Residues 1-22 (MASLKKSLFLVLFLGLVSLSIC) form the signal peptide. The propeptide occupies 23–46 (EEEKRENEEDAEDENHEEESEEKR). Residues 27 to 46 (RENEEDAEDENHEEESEEKR) are disordered. The span at 30–42 (EEDAEDENHEEES) shows a compositional bias: acidic residues. Position 62 is a leucine amide (Leu-62). Residues 66 to 70 (SEEKR) constitute a propeptide that is removed on maturation. Met-75 bears the Methionine amide mark. Residues 79–83 (SEEKR) constitute a propeptide that is removed on maturation. Met-88 bears the Methionine amide mark. Residues 92 to 94 (SEE) constitute a propeptide that is removed on maturation.

This sequence belongs to the frog skin active peptide (FSAP) family. Brevinin subfamily. As to expression, expressed by the skin glands.

Its subcellular location is the secreted. Its function is as follows. Fallaxidin-1.3 shows no antibacterial activity against Gram-positive or Gram-negative bacteria. Does not inhibit the formation of NO by neuronal nitric oxide synthase. Has no effect on splenocyte proliferation or smooth muscle contraction. Functionally, fallaxidin-3.2 shows antibacterial activity against the Gram-positive bacteria E.faecalis (MIC=100 uM) and L.lactis (MIC=500 uM). No antibacterial activity against the Gram-positive bacteria B.cereus, L.innocua, M.luteus, S.epidermidis, S.uberis and S.aureus, or the Gram-negative bacteria E.cloacae and E.coli. This Litoria fallax (Eastern dwarf tree frog) protein is Preprofallaxidin-9.